The following is a 784-amino-acid chain: N-alpha-acetyltransferase 35, NatC auxiliary subunit homolog (784 aa).

Disordered stretches follow at residues 1 to 23 (MYPS…VAEP), 320 to 353 (NTLD…PPAF), and 606 to 630 (SKTQ…NKKT). A compositionally biased stretch (basic residues) spans 617 to 630 (KNRKAAKPKKNKKT).

It belongs to the MAK10 family. In terms of assembly, component of the N-terminal acetyltransferase C (NatC) complex, which is composed of Naa35, Sbat/Naa38 and Naa30A.

Its subcellular location is the cytoplasm. Its function is as follows. Auxillary component of the N-terminal acetyltransferase C (NatC) complex which catalyzes acetylation of N-terminal methionine residues. The polypeptide is N-alpha-acetyltransferase 35, NatC auxiliary subunit homolog (Drosophila melanogaster (Fruit fly)).